A 374-amino-acid polypeptide reads, in one-letter code: MMTLQSSPMSVLTEDLVEDILSRVPATSLVRLRSTCKQWNAILNDRRFIKKHFDTAEKEYLDMLLRSLRVSSMSVNLHGLHDNIDPSIELKRELNLKGLLCNSGKVESFEVFHCNGLLLFTNTSTIVVWNPCTGQTKWIQTESANTRYHKYALGYENKNLCRDYKILRFLDDGTNFELEIYEFNSSSWRVLDSVEIDFELDIGSQGMSVKGNTYWIVIDDHEVDGELVNCFLTSFDFTRERFGPHVCLPFQTSWYSDVISLSSVREERLSVLFHEEDSLTMEIWVTNDITDTIVTSWSKFLRVDLYTHRFYNGVTFFIDEENKAAVFSEDVPDDSDDIHSIVYIIGQDRLRIVDLEDGPFWPQMFCYVPSLVQI.

Residues Ser6 to His52 enclose the F-box domain.

This chain is Putative F-box protein At3g17480, found in Arabidopsis thaliana (Mouse-ear cress).